A 1537-amino-acid chain; its full sequence is Adhesion G protein-coupled receptor L3 (1537 aa).

The first 19 residues, 1–19 (MWPPQLLILTMLLAPVVHG), serve as a signal peptide directing secretion. The Extracellular portion of the chain corresponds to 20-943 (GKHNERHPAL…VKHSDAVHDL (924 aa)). A disordered region spans residues 53-80 (PAAERSTAHRGQGPRGAARGVRGPGAPG). Residues 103 to 192 (SCESYPIELR…KYLEVQYECV (90 aa)) form the SUEL-type lectin domain. 5 disulfides stabilise this stretch: cysteine 104–cysteine 134, cysteine 113–cysteine 191, cysteine 146–cysteine 178, cysteine 159–cysteine 165, and cysteine 203–cysteine 385. Asparagine 161 is a glycosylation site (N-linked (GlcNAc...) asparagine). Residues 202–461 (LCPGLLKGVY…VVKYSLDFGP (260 aa)) enclose the Olfactomedin-like domain. Positions 317–347 (YHDTSPYRWGGKSDIDLAVDENGLWVIYATE) are interaction with FLRT3. Ca(2+) is bound by residues aspartate 332, asparagine 380, alanine 381, and valine 435. The tract at residues 521–540 (RSTTASLPGRRNRSTSTPSP) is disordered. Asparagine 532, asparagine 617, asparagine 827, asparagine 840, asparagine 885, and asparagine 911 each carry an N-linked (GlcNAc...) asparagine glycan. Residues 756 to 935 (DIVRENTDNI…AVLMAHVEVK (180 aa)) form the GAIN-B domain. 2 disulfide bridges follow: cysteine 886-cysteine 917 and cysteine 905-cysteine 919. The interval 886–935 (CSFWSYSKRTMTGYWSTQGCRLLTTNKTHTTCSCNHLTNFAVLMAHVEVK) is GPS. The segment at 923 to 939 (TNFAVLMAHVEVKHSDA) is stachel. A helical membrane pass occupies residues 944 to 969 (LLDVITWVGILLSLVCLLICIFTFCF). Over 970 to 975 (FRGLQS) the chain is Cytoplasmic. A helical membrane pass occupies residues 976-999 (DRNTIHKNLCISLFVAELLFLIGI). Asparagine 1000 is a glycosylation site (N-linked (GlcNAc...) asparagine). The Extracellular portion of the chain corresponds to 1000 to 1006 (NRTDQPI). A helical transmembrane segment spans residues 1007-1034 (ACAVFAALLHFFFLAAFTWMFLEGVQLY). A disulfide bridge links cysteine 1008 with cysteine 1080. The Cytoplasmic portion of the chain corresponds to 1035 to 1048 (IMLVEVFESEHSRR). Residues 1049–1071 (KYFYLVGYGMPALIVAVSAAVDY) traverse the membrane as a helical segment. The Extracellular portion of the chain corresponds to 1072–1086 (RSYGTDKVCWLRLDT). A helical membrane pass occupies residues 1087–1112 (YFIWSFIGPATLIIMLNVIFLGIALY). The Cytoplasmic segment spans residues 1113-1142 (KMFHHTAILKPESGCLDNINYEDNRPFIKS). Residues 1143-1163 (WVIGAIALLCLLGLTWAFGLM) traverse the membrane as a helical segment. Residues 1164-1168 (YINES) are Extracellular-facing. A glycan (N-linked (GlcNAc...) asparagine) is linked at asparagine 1166. Residues 1169 to 1195 (TVIMAYLFTIFNSLQGMFIFIFHCVLQ) form a helical membrane-spanning segment. Residues 1196–1537 (KKVRKEYGKC…KGPAHLVTSL (342 aa)) lie on the Cytoplasmic side of the membrane. The interval 1213 to 1237 (GKSTESSIGSGKTSGSRTPGRYSTG) is disordered. Phosphoserine is present on residues serine 1254 and serine 1522. The segment at 1512 to 1537 (FIVPPNKDGASPEGTSKGPAHLVTSL) is disordered. A PDZ-binding motif is present at residues 1532-1537 (HLVTSL).

Belongs to the G-protein coupled receptor 2 family. LN-TM7 subfamily. As to quaternary structure, heterodimer of 2 chains generated by proteolytic processing; the large extracellular N-terminal fragment and the membrane-bound C-terminal fragment predominantly remain associated and non-covalently linked. Interacts (via olfactomedin-like domain) with FLRT1 (via extracellular domain). Interacts (via olfactomedin-like domain) with FLRT2 (via extracellular domain). Interacts (via olfactomedin-like domain) with FLRT3 (via extracellular domain); the interaction is direct. Interacts (via extracellular domain) with TENM1. Interacts (via extracellular domain) with TENM2. Interacts (via extracellular domain) with TENM3. Identified in a complex with FLRT3 and UNC5B; does not interact with UNC5B by itself. Identified in a complex with FLRT3 and UNC5D; does not interact with UNC5D by itself. Interacts (via PDZ-binding motif) with SHANK3. Interacts (via PDZ-binding motif) with DLG4. Autoproteolytically processed at the GPS region of the GAIN-B domain; this cleavage modulates receptor activity. Post-translationally, O-glycosylated (major) and N-glycosylated. Localizes to postsynaptic spines in non-overlapping dendritic domains of CA1-region pyramidal neurons: specifically localizes to excitatory synapses in the S.oriens and S.radiatum, corresponding to distinct presynaptic inputs onto CA1-region pyramidal neurons.

It is found in the cell membrane. Its subcellular location is the postsynaptic cell membrane. It localises to the cell projection. The protein resides in the axon. The protein localises to the cell junction. Its activity is regulated as follows. Forms a heterodimer of 2 chains generated by proteolytic processing that remain associated through non-covalent interactions mediated by the GAIN-B domain. In the inactivated receptor, the Stachel sequence (also named stalk) is embedded in the GAIN-B domain, where it adopts a beta-strand conformation. On activation, the Stachel moves into the 7 transmembrane region and adopts a twisted hook-shaped configuration that forms contacts within the receptor, leading to coupling of a G-alpha protein, which activates signaling. The cleaved GAIN-B and N-terminal domains can then dissociate from the rest of the receptor. Its function is as follows. Orphan adhesion G-protein coupled receptor (aGPCR), which mediates synapse specificity. Ligand binding causes a conformation change that triggers signaling via guanine nucleotide-binding proteins (G proteins) and modulates the activity of downstream effectors. ADGRL3 is coupled with different classes of G alpha proteins, such as G(12)/G(13), G(s), G(i) or G(q), depending on the context. Coupling to G(12)/G(13) G proteins, which mediates the activation Rho small GTPases is the most efficient. Following G-protein coupled receptor activation, associates with cell adhesion molecules that are expressed at the surface of adjacent cells to direct synapse specificity. Specifically mediates the establishment of Schaffer-collateral synapses formed by CA3-region axons on CA1-region pyramidal neurons in the hippocampus. Localizes to postsynaptic spines in excitatory synapses in the S.oriens and S.radiatum and interacts with presynaptic cell adhesion molecules FLRT3 and TENM2, promoting synapse formation. Plays a role in the development of glutamatergic synapses in the cortex. Important in determining the connectivity rates between the principal neurons in the cortex. Orphan adhesion G-protein coupled receptor (aGPCR), which mediates synapse specificity. Ligand binding causes a conformation change that triggers signaling via guanine nucleotide-binding proteins (G proteins) and modulates the activity of downstream effectors, such as adenylate cyclase. Isoform 1 is specifically coupled to G(s) G proteins and mediates activation of adenylate cyclase activity. Following G-protein coupled receptor activation, undergoes liquid-liquid phase transition, associates with (1) cell adhesion molecules that are expressed at the surface of adjacent cells, as well as (2) PDZ-containing proteins, such as SHANK3 and DLG4, in the cytoplasm to direct synapse formation. Functionally, orphan adhesion G-protein coupled receptor (aGPCR). Ligand binding causes a conformation change that triggers signaling via guanine nucleotide-binding proteins (G proteins) and modulates the activity of downstream effectors, such as RhoA pathway. Isoform 7 is coupled to G(12) and/or G(13) G proteins (GNA12 and GNA13, respectively) and mediates the activation Rho small GTPases. The polypeptide is Adhesion G protein-coupled receptor L3 (Mus musculus (Mouse)).